Here is a 216-residue protein sequence, read N- to C-terminus: NKG2-D type II integral membrane protein (216 aa).

Topologically, residues 1-51 (MGWIRGRRSRHSWEMSEFHNYNLDLAKNDFSTRWQKQRCPVIKSKCRENTS) are cytoplasmic. A helical; Signal-anchor for type II membrane protein membrane pass occupies residues 52-72 (PLFFCCFIAVAMGIRFIVMVT). Residues 73–216 (IWSAVFLNSL…NTYICMQRTV (144 aa)) lie on the Extracellular side of the membrane. 2 disulfides stabilise this stretch: Cys-96/Cys-105 and Cys-99/Cys-110. A C-type lectin domain is found at 98-213 (PCPKNWICYK…STPNTYICMQ (116 aa)). 4 N-linked (GlcNAc...) asparagine glycosylation sites follow: Asn-115, Asn-131, Asn-163, and Asn-202. 2 disulfide bridges follow: Cys-127–Cys-211 and Cys-189–Cys-203.

In terms of assembly, homodimer; disulfide-linked. Heterohexamer composed of two subunits of KLRK1 and four subunits of HCST/DAP10. Interacts (via transmembrane domain) with HCST/DAP10 (via transmembrane domain); the interaction is required for KLRK1 NK cell surface and induces NK cell-mediated cytotoxicity. Can form disulfide-bonded heterodimer with CD94. Interacts with CEACAM1; recruits PTPN6 that dephosphorylates VAV1.

The protein resides in the cell membrane. In terms of biological role, functions as an activating and costimulatory receptor involved in immunosurveillance upon binding to various cellular stress-inducible ligands displayed at the surface of autologous tumor cells and virus-infected cells. Provides both stimulatory and costimulatory innate immune responses on activated killer (NK) cells, leading to cytotoxic activity. Acts as a costimulatory receptor for T-cell receptor (TCR) in CD8(+) T-cell-mediated adaptive immune responses by amplifying T-cell activation. Stimulates perforin-mediated elimination of ligand-expressing tumor cells. Signaling involves calcium influx, culminating in the expression of TNF-alpha. Participates in NK cell-mediated bone marrow graft rejection. May play a regulatory role in differentiation and survival of NK cells. Binds to ligands belonging to various subfamilies of MHC class I-related glycoproteins. This is NKG2-D type II integral membrane protein (KLRK1) from Pongo pygmaeus (Bornean orangutan).